The following is a 323-amino-acid chain: tRNA uridine(34) hydroxylase (323 aa).

Residues 123-217 enclose the Rhodanese domain; sequence SDPDVVVIDT…YLETIPEEES (95 aa). C177 serves as the catalytic Cysteine persulfide intermediate.

It belongs to the TrhO family.

It carries out the reaction uridine(34) in tRNA + AH2 + O2 = 5-hydroxyuridine(34) in tRNA + A + H2O. Catalyzes oxygen-dependent 5-hydroxyuridine (ho5U) modification at position 34 in tRNAs. The protein is tRNA uridine(34) hydroxylase of Methylobacillus flagellatus (strain ATCC 51484 / DSM 6875 / VKM B-1610 / KT).